Reading from the N-terminus, the 84-residue chain is Large ribosomal subunit protein bL27 (84 aa).

The interval methionine 1–lysine 24 is disordered.

Belongs to the bacterial ribosomal protein bL27 family.

This is Large ribosomal subunit protein bL27 from Pelobacter propionicus (strain DSM 2379 / NBRC 103807 / OttBd1).